A 461-amino-acid chain; its full sequence is D-phenylhydantoinase (461 aa).

A divalent metal cation contacts are provided by histidine 59, histidine 61, and lysine 151. Lysine 151 is modified (N6-carboxylysine). Position 156 (tyrosine 156) interacts with substrate. The a divalent metal cation site is built by histidine 182 and histidine 239. A substrate-binding site is contributed by serine 286. Position 313 (aspartate 313) interacts with a divalent metal cation. Residue asparagine 335 coordinates substrate.

It belongs to the metallo-dependent hydrolases superfamily. Hydantoinase/dihydropyrimidinase family. In terms of assembly, homotetramer. A divalent metal cation is required as a cofactor. Post-translationally, carboxylation allows a single lysine to coordinate two divalent metal cations.

It catalyses the reaction D-5-phenylhydantoin + H2O = N-carbamoyl-D-phenylglycine + H(+). Its function is as follows. Catalyzes the stereospecific hydrolysis of the cyclic amide bond of D-hydantoin derivatives with an aromatic side chains at the 5'-position. Has no activity on dihydropyrimidines. The physiological function is unknown. The protein is D-phenylhydantoinase of Escherichia coli (strain UTI89 / UPEC).